The primary structure comprises 454 residues: ESX-1 secretion-associated protein EspB (454 aa).

3 disordered regions span residues 17-40, 82-128, and 391-454; these read RADEVEAPMATPPTDVPQAPSGLT, GEVE…AGES, and AGQG…QDNK. The segment covering 391–422 has biased composition (gly residues); that stretch reads AGQGGGAAGRGMAGGGMGMPMGGAGQGQGGAK.

This sequence belongs to the EspB family. Cleaved at close to the C-terminus during secretion.

It localises to the secreted. In Mycobacterium marinum (strain ATCC BAA-535 / M), this protein is ESX-1 secretion-associated protein EspB.